The sequence spans 1522 residues: Adhesion G protein-coupled receptor B3 (1522 aa).

An N-terminal signal peptide occupies residues 1 to 25; the sequence is MKAVRNLLIYIFSTYLLVMFGFNAA. Over 26–880 the chain is Extracellular; sequence QDFWCSTLVK…MESSGTPSVT (855 aa). One can recognise a CUB domain in the interval 30 to 159; the sequence is CSTLVKGVIY…KSFFEFLVLN (130 aa). 5 N-linked (GlcNAc...) asparagine glycosylation sites follow: Asn51, Asn54, Asn82, Asn105, and Asn241. 4 TSP type-1 domains span residues 291 to 343, 345 to 398, 400 to 453, and 455 to 508; these read ESGV…ALCP, HGVW…ALCP, DGQW…PECT, and NGQW…QRCP. 14 cysteine pairs are disulfide-bonded: Cys303/Cys336, Cys307/Cys342, Cys318/Cys326, Cys357/Cys392, Cys361/Cys397, Cys372/Cys382, Cys412/Cys447, Cys416/Cys452, Cys427/Cys437, Cys467/Cys502, Cys471/Cys507, Cys482/Cys492, Cys514/Cys549, and Cys537/Cys567. Asn337 is a glycosylation site (N-linked (GlcNAc...) asparagine). N-linked (GlcNAc...) asparagine glycosylation occurs at Asn418. An N-linked (GlcNAc...) asparagine glycan is attached at Asn540. Ser619 carries the post-translational modification Phosphoserine. 4 N-linked (GlcNAc...) asparagine glycosylation sites follow: Asn625, Asn779, Asn812, and Asn828. Residues 693-869 enclose the GAIN-B domain; sequence QNSYLMTGNV…AILAQQPREI (177 aa). 2 disulfide bridges follow: Cys819–Cys851 and Cys839–Cys853. The tract at residues 819-869 is GPS; sequence CVLWDDSKSNESLGTWSTQGCKTVLTDASHTKCLCDRLSTFAILAQQPREI. The helical transmembrane segment at 881–901 threads the bilayer; the sequence is LIVGSGLSCLALITLAVVYAA. At 902–910 the chain is on the cytoplasmic side; it reads LWRYIRSER. The helical transmembrane segment at 911–931 threads the bilayer; sequence SIILINFCLSIISSNILILVG. At 932-939 the chain is on the extracellular side; the sequence is QTQTHNKS. Asn937 is a glycosylation site (N-linked (GlcNAc...) asparagine). The chain crosses the membrane as a helical span at residues 940–960; the sequence is ICTTTTAFLHFFFLASFCWVL. Residues 961–981 are Cytoplasmic-facing; sequence TEAWQSYMAVTGKIRTRLIRK. Residues 982–1002 form a helical membrane-spanning segment; the sequence is RFLCLGWGLPALVVATSVGFT. At 1003–1023 the chain is on the extracellular side; it reads RTKGYGTDHYCWLSLEGGLLY. A helical membrane pass occupies residues 1024 to 1044; the sequence is AFVGPAAAVVLVNMVIGILVF. Over 1045 to 1098 the chain is Cytoplasmic; sequence NKLVSRDGILDKKLKHRAGQMSEPHSGLTLKCAKCGVVSTTALSATTASNAMAS. The helical transmembrane segment at 1099-1119 threads the bilayer; sequence LWSSCVVLPLLALTWMSAVLA. The Extracellular segment spans residues 1120–1125; it reads MTDKRS. The helical transmembrane segment at 1126–1146 threads the bilayer; sequence ILFQILFAVFDSLQGFVIVMV. The Cytoplasmic segment spans residues 1147–1522; that stretch reads HCILRREVQD…VQEGDFQTEV (376 aa). Phosphoserine is present on residues Ser1220 and Ser1411.

Belongs to the G-protein coupled receptor 2 family. Adhesion G-protein coupled receptor (ADGR) subfamily. In terms of assembly, forms a heterodimer, consisting of a large extracellular region non-covalently linked to a seven-transmembrane moiety. Interacts (via its TSRs) with C1QL1, C1QL2, C1QL3 and C1QL4. Interacts via (C-terminus) with ELMO1, ELMO2 and ELMO3. Post-translationally, the endogenous protein is proteolytically cleaved into 2 subunits, an extracellular subunit and a seven-transmembrane subunit. In terms of tissue distribution, brain-specific expression.

Its subcellular location is the cell membrane. Functionally, receptor that plays a role in the regulation of synaptogenesis and dendritic spine formation at least partly via interaction with ELMO1 and RAC1 activity. Promotes myoblast fusion through ELMO/DOCK1. The protein is Adhesion G protein-coupled receptor B3 (Adgrb3) of Mus musculus (Mouse).